The sequence spans 835 residues: Protein translocase subunit SecA 1 (835 aa).

ATP-binding positions include glutamine 85, 103–107 (GEGKT), and aspartate 492. Residues 788–807 (VQGEAVHPSSDGEEAKKKPV) are disordered. Residues cysteine 819, cysteine 821, cysteine 830, and cysteine 831 each coordinate Zn(2+).

It belongs to the SecA family. Monomer and homodimer. Part of the essential Sec protein translocation apparatus which comprises SecA, SecYEG and auxiliary proteins SecDF. Other proteins may also be involved. Requires Zn(2+) as cofactor.

The protein resides in the cell membrane. It localises to the cytoplasm. It catalyses the reaction ATP + H2O + cellular proteinSide 1 = ADP + phosphate + cellular proteinSide 2.. Part of the Sec protein translocase complex. Interacts with the SecYEG preprotein conducting channel. Has a central role in coupling the hydrolysis of ATP to the transfer of proteins into and across the cell membrane, serving as an ATP-driven molecular motor driving the stepwise translocation of polypeptide chains across the membrane. In Bacillus thuringiensis (strain Al Hakam), this protein is Protein translocase subunit SecA 1.